A 790-amino-acid polypeptide reads, in one-letter code: Choline transporter-like 2 (790 aa).

The helical transmembrane segment at 47–67 (PCLFLFVTFLCAWGYVAYYAV) threads the bilayer. 2 N-linked (GlcNAc...) asparagine glycosylation sites follow: Asn102 and Asn259. A run of 3 helical transmembrane segments spans residues 288-308 (IITPYLITIHNITVLLTFQMI), 319-339 (ILVFIACSVLASLILIAMLRW), and 344-364 (LVWISIIGVITALSYGVYYSF). Residue Asn384 is glycosylated (N-linked (GlcNAc...) asparagine). The next 2 helical transmembrane spans lie at 400 to 420 (LWILIALSVILIVLLLVVLVL) and 449 to 469 (LVPWILQAVVIVFSLLVLLFL). An N-linked (GlcNAc...) asparagine glycan is attached at Asn483. 4 helical membrane-spanning segments follow: residues 545 to 565 (VIGFFWCICFVSAFSEMVLAF), 592 to 612 (VYYHLGTLAFGSLIIAICKII), 691 to 711 (VTGFLFFLSKLLLASGMAAVT), and 728 to 748 (FVPAVLVFIGTFIIASIFFSV).

It belongs to the CTL (choline transporter-like) family.

It is found in the membrane. The polypeptide is Choline transporter-like 2 (Anopheles gambiae (African malaria mosquito)).